Consider the following 446-residue polypeptide: Maltoporin (446 aa).

The signal sequence occupies residues 1–25 (MMITLRKLPLAVAVAAGVMSAQAMA).

Belongs to the porin LamB (TC 1.B.3) family. As to quaternary structure, homotrimer formed of three 18-stranded antiparallel beta-barrels, containing three independent channels.

Its subcellular location is the cell outer membrane. It catalyses the reaction beta-maltose(in) = beta-maltose(out). In terms of biological role, involved in the transport of maltose and maltodextrins. The protein is Maltoporin of Escherichia coli (strain K12 / MC4100 / BW2952).